A 162-amino-acid polypeptide reads, in one-letter code: NADH-quinone oxidoreductase subunit I (162 aa).

4Fe-4S ferredoxin-type domains lie at 54 to 83 and 93 to 122; these read RRYE…IESE and TRYD…ETQI. Residues Cys63, Cys66, Cys69, Cys73, Cys102, Cys105, Cys108, and Cys112 each contribute to the [4Fe-4S] cluster site.

The protein belongs to the complex I 23 kDa subunit family. In terms of assembly, NDH-1 is composed of 14 different subunits. Subunits NuoA, H, J, K, L, M, N constitute the membrane sector of the complex. Requires [4Fe-4S] cluster as cofactor.

It localises to the cell inner membrane. The catalysed reaction is a quinone + NADH + 5 H(+)(in) = a quinol + NAD(+) + 4 H(+)(out). Its function is as follows. NDH-1 shuttles electrons from NADH, via FMN and iron-sulfur (Fe-S) centers, to quinones in the respiratory chain. The immediate electron acceptor for the enzyme in this species is believed to be ubiquinone. Couples the redox reaction to proton translocation (for every two electrons transferred, four hydrogen ions are translocated across the cytoplasmic membrane), and thus conserves the redox energy in a proton gradient. This is NADH-quinone oxidoreductase subunit I from Burkholderia pseudomallei (strain 668).